The sequence spans 94 residues: Putative defensin-like protein 88 (94 aa).

The signal sequence occupies residues Met1–Ser26. 3 disulfide bridges follow: Cys32/Cys72, Cys38/Cys59, and Cys48/Cys71.

This sequence belongs to the DEFL family.

The protein localises to the secreted. In Arabidopsis thaliana (Mouse-ear cress), this protein is Putative defensin-like protein 88.